The following is a 364-amino-acid chain: Dual-specificity RNA methyltransferase RlmN (364 aa).

E91 (proton acceptor) is an active-site residue. The Radical SAM core domain maps to 102 to 337 (GTLRITQCLS…AIIRKSKGQD (236 aa)). C109 and C342 are joined by a disulfide. 3 residues coordinate [4Fe-4S] cluster: C116, C120, and C123. S-adenosyl-L-methionine is bound by residues 169-170 (GE), S201, 223-225 (SLH), and N299. The S-methylcysteine intermediate role is filled by C342.

The protein belongs to the radical SAM superfamily. RlmN family. The cofactor is [4Fe-4S] cluster.

It is found in the cytoplasm. The catalysed reaction is adenosine(2503) in 23S rRNA + 2 reduced [2Fe-2S]-[ferredoxin] + 2 S-adenosyl-L-methionine = 2-methyladenosine(2503) in 23S rRNA + 5'-deoxyadenosine + L-methionine + 2 oxidized [2Fe-2S]-[ferredoxin] + S-adenosyl-L-homocysteine. It catalyses the reaction adenosine(37) in tRNA + 2 reduced [2Fe-2S]-[ferredoxin] + 2 S-adenosyl-L-methionine = 2-methyladenosine(37) in tRNA + 5'-deoxyadenosine + L-methionine + 2 oxidized [2Fe-2S]-[ferredoxin] + S-adenosyl-L-homocysteine. Specifically methylates position 2 of adenine 2503 in 23S rRNA and position 2 of adenine 37 in tRNAs. m2A2503 modification seems to play a crucial role in the proofreading step occurring at the peptidyl transferase center and thus would serve to optimize ribosomal fidelity. The chain is Dual-specificity RNA methyltransferase RlmN from Nitratidesulfovibrio vulgaris (strain DP4) (Desulfovibrio vulgaris).